A 313-amino-acid chain; its full sequence is L-2-hydroxycarboxylate dehydrogenase (NAD(P)(+)) (313 aa).

Residues 7–13 and 34–37 contribute to the NADP(+) site; these read GASGRVG and REHS. Residues arginine 86 and arginine 92 each coordinate substrate. NADP(+) is bound by residues asparagine 99 and 121–123; that span reads ITN. 2 residues coordinate substrate: asparagine 123 and arginine 154. Catalysis depends on histidine 178, which acts as the Proton acceptor.

This sequence belongs to the LDH/MDH superfamily. In terms of assembly, homotetramer.

The protein localises to the cytoplasm. It carries out the reaction a (2S)-2-hydroxycarboxylate + NAD(+) = a 2-oxocarboxylate + NADH + H(+). It catalyses the reaction a (2S)-2-hydroxycarboxylate + NADP(+) = a 2-oxocarboxylate + NADPH + H(+). Catalyzes the reversible oxidation of (S)-malate and (S)-sulfolactate to oxaloacetate and sulfopyruvate, respectively. Can use both NADH and NADPH, although activity is higher with NADPH. Oxidation of (S)-sulfolactate is observed only in the presence of NADP(+). Can also oxidize tartrate. Cannot reduce pyruvate, nor alpha-ketoglutarate. The chain is L-2-hydroxycarboxylate dehydrogenase (NAD(P)(+)) (mdh) from Methanocaldococcus jannaschii (strain ATCC 43067 / DSM 2661 / JAL-1 / JCM 10045 / NBRC 100440) (Methanococcus jannaschii).